A 21-amino-acid polypeptide reads, in one-letter code: Nigrocin-2GRb (21 aa).

As to expression, expressed by the skin glands.

It is found in the secreted. Functionally, antimicrobial peptide active against the Gram-positive bacterium S.aureus (MIC=12.5 uM) and against the Gram-negative bacteria E.coli (MIC=3 uM). Has antifungal activity against C.albicans (MIC=50 uM). Has some hemolytic activity against human erythrocytes (LC(50)=40 uM). In Odorrana grahami (Yunnanfu frog), this protein is Nigrocin-2GRb.